The chain runs to 484 residues: tRNA sulfurtransferase (484 aa).

The THUMP domain maps to 63–167; it reads REMIERLTCT…LDRLFVIHRQ (105 aa). ATP is bound by residues 185–186, lysine 267, glycine 289, and glutamine 298; that span reads LM. A disulfide bridge connects residues cysteine 346 and cysteine 457. Residues 405 to 483 enclose the Rhodanese domain; that stretch reads VLPGQIVIDI…GHTNVRVYRP (79 aa). Cysteine 457 serves as the catalytic Cysteine persulfide intermediate.

Belongs to the ThiI family.

It localises to the cytoplasm. The enzyme catalyses [ThiI sulfur-carrier protein]-S-sulfanyl-L-cysteine + a uridine in tRNA + 2 reduced [2Fe-2S]-[ferredoxin] + ATP + H(+) = [ThiI sulfur-carrier protein]-L-cysteine + a 4-thiouridine in tRNA + 2 oxidized [2Fe-2S]-[ferredoxin] + AMP + diphosphate. It catalyses the reaction [ThiS sulfur-carrier protein]-C-terminal Gly-Gly-AMP + S-sulfanyl-L-cysteinyl-[cysteine desulfurase] + AH2 = [ThiS sulfur-carrier protein]-C-terminal-Gly-aminoethanethioate + L-cysteinyl-[cysteine desulfurase] + A + AMP + 2 H(+). The protein operates within cofactor biosynthesis; thiamine diphosphate biosynthesis. In terms of biological role, catalyzes the ATP-dependent transfer of a sulfur to tRNA to produce 4-thiouridine in position 8 of tRNAs, which functions as a near-UV photosensor. Also catalyzes the transfer of sulfur to the sulfur carrier protein ThiS, forming ThiS-thiocarboxylate. This is a step in the synthesis of thiazole, in the thiamine biosynthesis pathway. The sulfur is donated as persulfide by IscS. The polypeptide is tRNA sulfurtransferase (Pseudomonas aeruginosa (strain LESB58)).